The following is a 215-amino-acid chain: Chaperone protein TorD (215 aa).

It belongs to the TorD/DmsD family. TorD subfamily.

The protein resides in the cytoplasm. Involved in the biogenesis of TorA. Acts on TorA before the insertion of the molybdenum cofactor and, as a result, probably favors a conformation of the apoenzyme that is competent for acquiring the cofactor. The chain is Chaperone protein TorD from Shewanella piezotolerans (strain WP3 / JCM 13877).